The primary structure comprises 45 residues: uncharacterized protein (45 aa).

This is an uncharacterized protein from Xylella fastidiosa (strain Temecula1 / ATCC 700964).